We begin with the raw amino-acid sequence, 250 residues long: Insertion sequence IS232 putative ATP-binding protein (250 aa).

Residue 108-115 (GPSGVGKT) coordinates ATP.

Belongs to the IS21/IS1162 putative ATP-binding protein family.

This is Insertion sequence IS232 putative ATP-binding protein from Bacillus thuringiensis subsp. berliner.